A 62-amino-acid polypeptide reads, in one-letter code: Large ribosomal subunit protein bL28 (62 aa).

The protein belongs to the bacterial ribosomal protein bL28 family.

In Clostridioides difficile (strain 630) (Peptoclostridium difficile), this protein is Large ribosomal subunit protein bL28.